A 735-amino-acid polypeptide reads, in one-letter code: Ion-translocating oxidoreductase complex subunit C (735 aa).

4Fe-4S ferredoxin-type domains lie at 368–397 (MGAP…QQLY) and 407–436 (KATA…VQYF). Positions 377, 380, 383, 387, 416, 419, 422, and 426 each coordinate [4Fe-4S] cluster. The interval 538 to 715 (KQAAHPMADS…PADPRKAAVA (178 aa)) is disordered. Positions 556 to 565 (KAAVEAAIAR) are enriched in low complexity.

The protein belongs to the 4Fe4S bacterial-type ferredoxin family. RnfC subfamily. The complex is composed of six subunits: RsxA, RsxB, RsxC, RsxD, RsxE and RsxG. It depends on [4Fe-4S] cluster as a cofactor.

The protein resides in the cell inner membrane. Functionally, part of a membrane-bound complex that couples electron transfer with translocation of ions across the membrane. Required to maintain the reduced state of SoxR. This chain is Ion-translocating oxidoreductase complex subunit C, found in Salmonella typhimurium (strain LT2 / SGSC1412 / ATCC 700720).